The chain runs to 428 residues: Histidine--tRNA ligase (428 aa).

Belongs to the class-II aminoacyl-tRNA synthetase family. Homodimer.

The protein localises to the cytoplasm. It carries out the reaction tRNA(His) + L-histidine + ATP = L-histidyl-tRNA(His) + AMP + diphosphate + H(+). This Halalkalibacterium halodurans (strain ATCC BAA-125 / DSM 18197 / FERM 7344 / JCM 9153 / C-125) (Bacillus halodurans) protein is Histidine--tRNA ligase.